The primary structure comprises 341 residues: L-threonine 3-dehydrogenase (341 aa).

Residue cysteine 38 coordinates Zn(2+). Active-site charge relay system residues include threonine 40 and histidine 43. Residues histidine 63, glutamate 64, cysteine 93, cysteine 96, cysteine 99, and cysteine 107 each contribute to the Zn(2+) site. NAD(+) contacts are provided by residues isoleucine 175, aspartate 195, arginine 200, 262-264, and 286-287; these read LGI and IY.

This sequence belongs to the zinc-containing alcohol dehydrogenase family. Homotetramer. The cofactor is Zn(2+).

It is found in the cytoplasm. The enzyme catalyses L-threonine + NAD(+) = (2S)-2-amino-3-oxobutanoate + NADH + H(+). It functions in the pathway amino-acid degradation; L-threonine degradation via oxydo-reductase pathway; glycine from L-threonine: step 1/2. In terms of biological role, catalyzes the NAD(+)-dependent oxidation of L-threonine to 2-amino-3-ketobutyrate. The protein is L-threonine 3-dehydrogenase of Cronobacter sakazakii (strain ATCC BAA-894) (Enterobacter sakazakii).